Here is a 440-residue protein sequence, read N- to C-terminus: L-gulonolactone oxidase (440 aa).

Residues 17–187 (YGCCPEMYFQ…LTVTLQCVPQ (171 aa)) form the FAD-binding PCMH-type domain. The residue at position 54 (histidine 54) is a Pros-8alpha-FAD histidine. A helical transmembrane segment spans residues 253–273 (FYLLEFLLWISTFLPGLVGWI).

It belongs to the oxygen-dependent FAD-linked oxidoreductase family. Requires FAD as cofactor.

The protein resides in the microsome membrane. The protein localises to the endoplasmic reticulum membrane. It catalyses the reaction L-gulono-1,4-lactone + O2 = L-ascorbate + H2O2 + H(+). It functions in the pathway cofactor biosynthesis; L-ascorbate biosynthesis via UDP-alpha-D-glucuronate pathway; L-ascorbate from UDP-alpha-D-glucuronate: step 4/4. Its function is as follows. Oxidizes L-gulono-1,4-lactone to hydrogen peroxide and L-xylo-hexulonolactone which spontaneously isomerizes to L-ascorbate. This Bos taurus (Bovine) protein is L-gulonolactone oxidase (GULO).